The sequence spans 345 residues: Phosphoribosylformylglycinamidine cyclo-ligase (345 aa).

This sequence belongs to the AIR synthase family.

It localises to the cytoplasm. The enzyme catalyses 2-formamido-N(1)-(5-O-phospho-beta-D-ribosyl)acetamidine + ATP = 5-amino-1-(5-phospho-beta-D-ribosyl)imidazole + ADP + phosphate + H(+). It functions in the pathway purine metabolism; IMP biosynthesis via de novo pathway; 5-amino-1-(5-phospho-D-ribosyl)imidazole from N(2)-formyl-N(1)-(5-phospho-D-ribosyl)glycinamide: step 2/2. In Escherichia coli (strain K12 / MC4100 / BW2952), this protein is Phosphoribosylformylglycinamidine cyclo-ligase.